A 371-amino-acid polypeptide reads, in one-letter code: Chorismate synthase (371 aa).

Residues Arg48 and Arg54 each coordinate NADP(+). Residues 131-133 (RSS), 245-246 (NA), Gly290, 305-309 (KPTSS), and Arg331 each bind FMN.

The protein belongs to the chorismate synthase family. In terms of assembly, homotetramer. It depends on FMNH2 as a cofactor.

The catalysed reaction is 5-O-(1-carboxyvinyl)-3-phosphoshikimate = chorismate + phosphate. The protein operates within metabolic intermediate biosynthesis; chorismate biosynthesis; chorismate from D-erythrose 4-phosphate and phosphoenolpyruvate: step 7/7. Catalyzes the anti-1,4-elimination of the C-3 phosphate and the C-6 proR hydrogen from 5-enolpyruvylshikimate-3-phosphate (EPSP) to yield chorismate, which is the branch point compound that serves as the starting substrate for the three terminal pathways of aromatic amino acid biosynthesis. This reaction introduces a second double bond into the aromatic ring system. This is Chorismate synthase from Mesorhizobium japonicum (strain LMG 29417 / CECT 9101 / MAFF 303099) (Mesorhizobium loti (strain MAFF 303099)).